Consider the following 189-residue polypeptide: Ras-like protein 1 (189 aa).

Position 10–17 (10–17 (GAGGVGKS)) interacts with GTP. Positions 32 to 40 (YDPTIEDSY) match the Effector region motif. GTP is bound by residues 57 to 61 (DTAGQ) and 116 to 119 (NKCD). Cysteine 186 bears the Cysteine methyl ester mark. Cysteine 186 carries S-geranylgeranyl cysteine lipidation. Residues 187–189 (KML) constitute a propeptide, removed in mature form.

The protein belongs to the small GTPase superfamily. Ras family.

The protein resides in the cell membrane. It catalyses the reaction GTP + H2O = GDP + phosphate + H(+). Its activity is regulated as follows. Alternates between an inactive form bound to GDP and an active form bound to GTP. Activated by a guanine nucleotide-exchange factor (GEF) and inactivated by a GTPase-activating protein (GAP). Its function is as follows. Ras proteins bind GDP/GTP and possess intrinsic GTPase activity. Plays a role in eye development by regulating cell growth, survival of postmitotic ommatidial cells and differentiation of photoreceptor cells. During larval development, mediates Ptth/tor signaling leading to the production of ecdysone, a hormone required for the initiation of metamorphosis. The chain is Ras-like protein 1 from Drosophila grimshawi (Hawaiian fruit fly).